Reading from the N-terminus, the 186-residue chain is Lipid A palmitoyltransferase PagP (186 aa).

An N-terminal signal peptide occupies residues 1 to 25 (MKVSKYVAIFFFVFIQLISVGKVFA). Catalysis depends on residues His-58, Asp-101, and Ser-102.

Belongs to the lipid A palmitoyltransferase family. As to quaternary structure, homodimer.

It localises to the cell outer membrane. The catalysed reaction is lipid A (E. coli) + a 1-hexadecanoyl-2-acyl-sn-glycero-3-phosphocholine = hepta-acyl lipid A (E. coli) + a 2-acyl-sn-glycero-3-phosphocholine. It carries out the reaction lipid IIA + a 1-hexadecanoyl-2-acyl-sn-glycero-3-phosphocholine = lipid IIB + a 2-acyl-sn-glycero-3-phosphocholine. It catalyses the reaction lipid IVA (E. coli) + a 1-hexadecanoyl-2-acyl-sn-glycero-3-phosphocholine = lipid IVB (E. coli) + a 2-acyl-sn-glycero-3-phosphocholine. Transfers a palmitate residue from the sn-1 position of a phospholipid to the N-linked hydroxymyristate on the proximal unit of lipid A or its precursors. The protein is Lipid A palmitoyltransferase PagP of Escherichia coli O6:K15:H31 (strain 536 / UPEC).